Here is a 324-residue protein sequence, read N- to C-terminus: Zinc transporter ZIP1 (324 aa).

The Extracellular portion of the chain corresponds to 1 to 30 (MGPWGEPELLVWRPEAAASEAPVPMGLEVK). Residues 31–51 (LGALVLLLVLTLICSLVPVCV) traverse the membrane as a helical segment. Residues 52-68 (LRRPGANPEASASRQKA) are Cytoplasmic-facing. The chain crosses the membrane as a helical span at residues 69 to 89 (LSLVSCFAGGVFLATCLLDLL). The Extracellular portion of the chain corresponds to 90–104 (PDYLGAIDEALAALH). The helical transmembrane segment at 105–125 (VTLQFPLQEFILAMGFFLVLV) threads the bilayer. Residues 126-179 (MEQITLAYKEQSGPPPREETRALLGTVNGGPQHWHDGLGVPQAGGASSAPSALR) are Cytoplasmic-facing. A helical transmembrane segment spans residues 180–200 (ACVLVFSLALHSVFEGLAVGL). At 201–206 (QRDQAR) the chain is on the extracellular side. The chain crosses the membrane as a helical span at residues 207–227 (AMELCLALLLHKGILAVSLSL). Topologically, residues 228–237 (RLLQSHLRAQ) are cytoplasmic. The chain crosses the membrane as a helical span at residues 238–258 (VVAGCGILFSCMTPLGIGLGT). Topologically, residues 259–272 (ALAESAGPLHQLAQ) are extracellular. Residues 273–293 (SVLEGMAAGTFLYITFLEILP) traverse the membrane as a helical segment. Over 294-303 (QELATSEQRI) the chain is Cytoplasmic. A helical transmembrane segment spans residues 304–324 (LKVILLLAGFALLTGLLFIQI).

Belongs to the ZIP transporter (TC 2.A.5) family.

It localises to the cell membrane. The protein localises to the endoplasmic reticulum membrane. The catalysed reaction is Zn(2+)(in) = Zn(2+)(out). Its function is as follows. Transporter for the divalent cation Zn(2+). Mediates the influx of Zn(2+) into cells from extracellular space. In Bos taurus (Bovine), this protein is Zinc transporter ZIP1 (SLC39A1).